Here is a 213-residue protein sequence, read N- to C-terminus: MHQQKRQPELVEGNLPVFVFPTELIFYADDQSTHKQVLTLYNPYEFALKFKVLCTTPNKYVVVNAAGAVKPQCCVDIVIRHRDVRSCHYGVIDKFRLQVSEQSQRKALGRKEVVATLLPSAKEQQKEEEEKRIKEHLTESLFFEQSFQPENRAVSSGPSLLTVFLGVVCIAALMLPTLGDVESLVPLYLHLSVNQKLVAAYILGLITMAILRT.

The MSP domain maps to proline 16 to phenylalanine 143. A run of 2 helical transmembrane segments spans residues serine 159 to glycine 179 and leucine 191 to leucine 211. The Nuclear export signal motif lies at leucine 205–methionine 208.

It localises to the endoplasmic reticulum membrane. It is found in the golgi apparatus membrane. Plays a role in differentiation and/or proliferation of mesenchymal stem cells. Proposed to be involved in epithelial-to-mesenchymal transition (EMT). However, another study suggests that it is not required for EMT or stem cell self-renewal and acts during later stages of differentiation. In Pongo abelii (Sumatran orangutan), this protein is Motile sperm domain-containing protein 1 (MOSPD1).